The primary structure comprises 149 residues: SsrA-binding protein (149 aa).

This sequence belongs to the SmpB family.

It is found in the cytoplasm. Its function is as follows. Required for rescue of stalled ribosomes mediated by trans-translation. Binds to transfer-messenger RNA (tmRNA), required for stable association of tmRNA with ribosomes. tmRNA and SmpB together mimic tRNA shape, replacing the anticodon stem-loop with SmpB. tmRNA is encoded by the ssrA gene; the 2 termini fold to resemble tRNA(Ala) and it encodes a 'tag peptide', a short internal open reading frame. During trans-translation Ala-aminoacylated tmRNA acts like a tRNA, entering the A-site of stalled ribosomes, displacing the stalled mRNA. The ribosome then switches to translate the ORF on the tmRNA; the nascent peptide is terminated with the 'tag peptide' encoded by the tmRNA and targeted for degradation. The ribosome is freed to recommence translation, which seems to be the essential function of trans-translation. This chain is SsrA-binding protein, found in Anaplasma marginale (strain Florida).